A 257-amino-acid chain; its full sequence is NAD-capped RNA hydrolase NudC (257 aa).

Arginine 69 contacts substrate. Zn(2+)-binding residues include cysteine 98 and cysteine 101. Glutamate 111 serves as a coordination point for substrate. Cysteine 116 and cysteine 119 together coordinate Zn(2+). Tyrosine 124 provides a ligand contact to substrate. In terms of domain architecture, Nudix hydrolase spans 125–248 (PQIAPCIIVA…TVARRLIEDT (124 aa)). Alanine 158, glutamate 174, and glutamate 178 together coordinate a divalent metal cation. A Nudix box motif is present at residues 159–180 (GFVEVGETLEQAVAREVMEESG). A substrate-binding site is contributed by 192-199 (QPWPFPQS). Glutamate 219 contacts a divalent metal cation. Residue alanine 241 participates in substrate binding.

Belongs to the Nudix hydrolase family. NudC subfamily. Homodimer. Requires Mg(2+) as cofactor. Mn(2+) is required as a cofactor. The cofactor is Zn(2+).

The catalysed reaction is a 5'-end NAD(+)-phospho-ribonucleoside in mRNA + H2O = a 5'-end phospho-adenosine-phospho-ribonucleoside in mRNA + beta-nicotinamide D-ribonucleotide + 2 H(+). It catalyses the reaction NAD(+) + H2O = beta-nicotinamide D-ribonucleotide + AMP + 2 H(+). It carries out the reaction NADH + H2O = reduced beta-nicotinamide D-ribonucleotide + AMP + 2 H(+). In terms of biological role, mRNA decapping enzyme that specifically removes the nicotinamide adenine dinucleotide (NAD) cap from a subset of mRNAs by hydrolyzing the diphosphate linkage to produce nicotinamide mononucleotide (NMN) and 5' monophosphate mRNA. The NAD-cap is present at the 5'-end of some mRNAs and stabilizes RNA against 5'-processing. Has preference for mRNAs with a 5'-end purine. Catalyzes the hydrolysis of a broad range of dinucleotide pyrophosphates. This Klebsiella pneumoniae (strain 342) protein is NAD-capped RNA hydrolase NudC.